A 185-amino-acid polypeptide reads, in one-letter code: 3-hexulose-6-phosphate isomerase (185 aa).

Residues 29 to 172 (LADHILSSHQ…ILKLMEKKGL (144 aa)) enclose the SIS domain. Residues serine 47 and 86 to 91 (SGSGET) contribute to the substrate site. Catalysis depends on glutamate 152, which acts as the Proton acceptor.

The protein belongs to the SIS family. PHI subfamily. As to quaternary structure, homotetramer.

The enzyme catalyses D-arabino-hex-3-ulose 6-phosphate = beta-D-fructose 6-phosphate. Its pathway is one-carbon metabolism; formaldehyde assimilation via RuMP pathway; D-fructose 6-phosphate from D-ribulose 5-phosphate and formaldehyde: step 2/2. Catalyzes the isomerization between 3-hexulose 6-phosphate and fructose 6-phosphate. Together with HxlA, may act as a formaldehyde detoxification system. This is 3-hexulose-6-phosphate isomerase (hxlB) from Bacillus subtilis (strain 168).